The primary structure comprises 133 residues: Binder of sperm protein homolog 1 (133 aa).

Residues 1–20 (MAQPLDFLLVSICLFHSLFS) form the signal peptide. 2 consecutive Fibronectin type-II domains span residues 40–84 (TEDG…YCAL) and 85–133 (SDYA…YCIE). 4 disulfides stabilise this stretch: C45-C69, C59-C82, C90-C116, and C104-C131. N72 is a glycosylation site (N-linked (GlcNAc...) asparagine).

This sequence belongs to the seminal plasma protein family. In terms of tissue distribution, expressed only in the epididymis.

Its subcellular location is the secreted. In terms of biological role, binds sperm in vitro and promotes sperm capacitation. Specifically promotes capacitation induced by high density lipoproteins (HDLs). Also binds heparin, phospholipid liposomes, and weakly to gelatin. Does not bind chondroitin sulfate B. The protein is Binder of sperm protein homolog 1 (Bsph1) of Mus musculus (Mouse).